The chain runs to 387 residues: Succinyl-diaminopimelate desuccinylase (387 aa).

Histidine 74 is a Zn(2+) binding site. Aspartate 76 is an active-site residue. Zn(2+) is bound at residue aspartate 107. The active-site Proton acceptor is the glutamate 142. Zn(2+) contacts are provided by glutamate 143, glutamate 171, and histidine 360.

It belongs to the peptidase M20A family. DapE subfamily. In terms of assembly, homodimer. Zn(2+) is required as a cofactor. It depends on Co(2+) as a cofactor.

It catalyses the reaction N-succinyl-(2S,6S)-2,6-diaminopimelate + H2O = (2S,6S)-2,6-diaminopimelate + succinate. The protein operates within amino-acid biosynthesis; L-lysine biosynthesis via DAP pathway; LL-2,6-diaminopimelate from (S)-tetrahydrodipicolinate (succinylase route): step 3/3. Catalyzes the hydrolysis of N-succinyl-L,L-diaminopimelic acid (SDAP), forming succinate and LL-2,6-diaminopimelate (DAP), an intermediate involved in the bacterial biosynthesis of lysine and meso-diaminopimelic acid, an essential component of bacterial cell walls. The protein is Succinyl-diaminopimelate desuccinylase of Rhodopseudomonas palustris (strain BisA53).